A 702-amino-acid chain; its full sequence is Polyribonucleotide nucleotidyltransferase (702 aa).

Mg(2+) is bound by residues Asp485 and Asp491. The region spanning 552–612 (PRTEIICIDP…EGVKKAISII (61 aa)) is the KH domain. Residues 622-690 (GEIYLGKVTK…NQGRINLSRK (69 aa)) form the S1 motif domain.

The protein belongs to the polyribonucleotide nucleotidyltransferase family. Mg(2+) is required as a cofactor.

The protein localises to the cytoplasm. It carries out the reaction RNA(n+1) + phosphate = RNA(n) + a ribonucleoside 5'-diphosphate. Its function is as follows. Involved in mRNA degradation. Catalyzes the phosphorolysis of single-stranded polyribonucleotides processively in the 3'- to 5'-direction. The polypeptide is Polyribonucleotide nucleotidyltransferase (Clostridium botulinum (strain Loch Maree / Type A3)).